The sequence spans 136 residues: Small ribosomal subunit protein uS9 (136 aa).

This sequence belongs to the universal ribosomal protein uS9 family.

This chain is Small ribosomal subunit protein uS9, found in Borreliella afzelii (strain PKo) (Borrelia afzelii).